We begin with the raw amino-acid sequence, 30 residues long: Unknown protein from spot 365 of 2D-PAGE of etiolated coleoptile (30 aa).

It belongs to the zinc-containing alcohol dehydrogenase family.

The sequence is that of Unknown protein from spot 365 of 2D-PAGE of etiolated coleoptile from Zea mays (Maize).